The sequence spans 442 residues: Cell cycle checkpoint control protein RAD9B (442 aa).

Disordered stretches follow at residues 370–392 and 422–442; these read EVPE…TEDV and QSLA…FSTF. Residue Ser-387 is modified to Phosphoserine.

The protein belongs to the rad9 family. In terms of assembly, interacts with HUS1, HUS1B, RAD1, RAD9A and RAD17.

This Bos taurus (Bovine) protein is Cell cycle checkpoint control protein RAD9B (RAD9B).